The chain runs to 311 residues: VQ motif-containing protein 9 (311 aa).

Low complexity predominate over residues 1–27 (MDKSCNSSGDSSAVSASATSSTGNNTT). Residues 1–78 (MDKSCNSSGD…QINQGNLHQH (78 aa)) form a disordered region. The VQ motif lies at 90–99 (FRDVVQKLTG). 3 disordered regions span residues 103–125 (HERISAPPQQPIHHPKPQQSSRL), 228–266 (QQENAPPSQHNSFPPPHPPPPSSAVSQTVPTSIPAPPLF), and 290–311 (GQLGFPVSPTTVPLPSPKYKGH). Residues 240–249 (FPPPHPPPPS) are compositionally biased toward pro residues. The span at 290-302 (GQLGFPVSPTTVP) shows a compositional bias: low complexity.

Interacts (via N-terminus) with WRKY8. Highly expressed in roots and at lower levels in rosette leaves, cauline leaves, stems, flowers and siliques.

It is found in the nucleus. Its function is as follows. Functions as a negative regulator of salt stress response. Functions as a repressor of WRKY8 transcription factor by decreasing the DNA-binding activity of WRKY8 and acts antagonistically with WRKY8 to regulate sodium and potassium homeostasis under salt stress. The sequence is that of VQ motif-containing protein 9 from Arabidopsis thaliana (Mouse-ear cress).